Consider the following 1116-residue polypeptide: Auxin response factor 21 (1116 aa).

The TF-B3 DNA-binding region spans 132–234 (FCKTLTASDT…QLLLGIRRAN (103 aa)). The disordered stretch occupies residues 763–812 (KTDDVPSTSTSPSTNSNPVLLQSIPSSSKNQSLTTAGKTSQSSVVLGPTI). A compositionally biased stretch (low complexity) spans 768-780 (PSTSTSPSTNSNP). The span at 781 to 806 (VLLQSIPSSSKNQSLTTAGKTSQSSV) shows a compositional bias: polar residues. Residues 998 to 1082 (RTYTKVHKRG…RCIRILSPQE (85 aa)) form the PB1 domain.

The protein belongs to the ARF family. Homodimers and heterodimers. Expressed in roots, culms, leaves and young panicles.

It is found in the nucleus. Its function is as follows. Auxin response factors (ARFs) are transcriptional factors that bind specifically to the DNA sequence 5'-TGTCTC-3' found in the auxin-responsive promoter elements (AuxREs). This chain is Auxin response factor 21 (ARF21), found in Oryza sativa subsp. japonica (Rice).